Reading from the N-terminus, the 544-residue chain is Flagellar hook-associated protein 1 (544 aa).

The protein belongs to the flagella basal body rod proteins family.

It localises to the secreted. Its subcellular location is the bacterial flagellum. The polypeptide is Flagellar hook-associated protein 1 (flgK) (Buchnera aphidicola subsp. Schizaphis graminum (strain Sg)).